A 289-amino-acid chain; its full sequence is Cyclin-dependent kinase 2 homolog (289 aa).

Positions 4 to 285 (YHGLEKIGEG…AKQAIEHPYF (282 aa)) constitute a Protein kinase domain. Residues 10 to 18 (IGEGTYGVV) and lysine 32 each bind ATP. At threonine 14 the chain carries Phosphothreonine. Tyrosine 15 carries the phosphotyrosine modification. Aspartate 126 serves as the catalytic Proton acceptor. Threonine 159 bears the Phosphothreonine mark.

Belongs to the protein kinase superfamily. CMGC Ser/Thr protein kinase family. CDC2/CDKX subfamily. May form a complex composed of at least the catalytic subunit CRK2 and a cyclin. Requires Mg(2+) as cofactor.

It is found in the cytoplasm. It carries out the reaction L-seryl-[protein] + ATP = O-phospho-L-seryl-[protein] + ADP + H(+). The enzyme catalyses L-threonyl-[protein] + ATP = O-phospho-L-threonyl-[protein] + ADP + H(+). It catalyses the reaction [DNA-directed RNA polymerase] + ATP = phospho-[DNA-directed RNA polymerase] + ADP + H(+). Its activity is regulated as follows. Phosphorylation at Thr-14 or Tyr-15 inactivates the enzyme, while phosphorylation at Thr-159 activates it. Its function is as follows. Serine/threonine-protein kinase. Involved in the control of the cell cycle. Required for entry into S-phase and mitosis. Probable component of the kinase complex that phosphorylates the repetitive C-terminus of RNA polymerase II. This Plasmodium yoelii yoelii protein is Cyclin-dependent kinase 2 homolog.